Reading from the N-terminus, the 1244-residue chain is Superkiller complex protein 2 (1244 aa).

A disordered region spans residues 218–249 (LDLSGGDEDEGEAAGGPRGDNASPSPSGTPLV). Residues Ser-242 and Ser-253 each carry the phosphoserine modification. Positions 316 to 472 (ILHLEQHDSV…WIGRLKRRQI (157 aa)) constitute a Helicase ATP-binding domain. Position 329–336 (329–336 (AHTSAGKT)) interacts with ATP. The DEVH box signature appears at 420-423 (DEVH). The region spanning 582 to 752 (GLTSLDLTTS…LTYTMILNLL (171 aa)) is the Helicase C-terminal domain.

It belongs to the helicase family. SKI2 subfamily. Component of the SKI complex which consists of SKIC2, SKIC3 and SKIC8. Interacts with HBS1L isoform 2.

The protein resides in the nucleus. Its subcellular location is the cytoplasm. It catalyses the reaction ATP + H2O = ADP + phosphate + H(+). Its function is as follows. Helicase component of the SKI complex, a multiprotein complex that assists the RNA-degrading exosome during the mRNA decay and quality-control pathways. The SKI complex catalyzes mRNA extraction from 80S ribosomal complexes in the 3'-5' direction and channels mRNA to the cytosolic exosome for degradation. SKI-mediated extraction of mRNA from stalled ribosomes allow binding of the Pelota-HBS1L complex and subsequent ribosome disassembly by ABCE1 for ribosome recycling. In the nucleus, the SKI complex associates with transcriptionally active genes in a manner dependent on PAF1 complex (PAF1C). This Mus musculus (Mouse) protein is Superkiller complex protein 2.